Reading from the N-terminus, the 399-residue chain is MGRADKVVLAYSGGVDTSVCIPYLKNEWGVKEVITLAADLGQGDELGPIQAKALRCGAVESLVTNAQEEFVTEYAFRAIKANALYENRYPLSTALARPLIAKLLVEAAEKYGADAVAHGCTAKGNDQVRFDLGILALNPNLKVLAPAREWNMSREETIAYGERCGVESPVKKSSPFSIDRNLLGRSIEAGPLEDPMTEPPEEIYLMTKAIADTPDTPEYVDIGFEKGIPVSLNGQTLDPVSLISQLNEKVGNHGVGRLDMIENRVVGIKSREIYEAPALLVLIDAHRDLESLTLTADVTQYKHGVGDTYSQLIYRGLWYSPLKTALDALIDQTQERVTGMVRVKLFKGNAVIVGRQSENSIYSANLSTYGSDDAFDHKAAEGFIYIWGLPTRVWAQKTK.

ATP-binding positions include 10–18 (AYSGGVDTS) and A38. Y89 contacts L-citrulline. G119 contributes to the ATP binding site. L-aspartate contacts are provided by T121, N125, and D126. Position 125 (N125) interacts with L-citrulline. Positions 129, 177, 186, 262, and 274 each coordinate L-citrulline.

This sequence belongs to the argininosuccinate synthase family. Type 1 subfamily. Homotetramer.

The protein localises to the cytoplasm. It catalyses the reaction L-citrulline + L-aspartate + ATP = 2-(N(omega)-L-arginino)succinate + AMP + diphosphate + H(+). It functions in the pathway amino-acid biosynthesis; L-arginine biosynthesis; L-arginine from L-ornithine and carbamoyl phosphate: step 2/3. The chain is Argininosuccinate synthase from Rippkaea orientalis (strain PCC 8801 / RF-1) (Cyanothece sp. (strain PCC 8801)).